A 336-amino-acid chain; its full sequence is Ornithine carbamoyltransferase (336 aa).

Carbamoyl phosphate is bound by residues 56–59 (STRT), Gln83, Arg107, and 134–137 (HPTQ). L-ornithine contacts are provided by residues Asn168, Asp232, and 236–237 (SM). Residues 274–275 (CL) and Arg320 each bind carbamoyl phosphate.

This sequence belongs to the aspartate/ornithine carbamoyltransferase superfamily. OTCase family.

The protein localises to the cytoplasm. The enzyme catalyses carbamoyl phosphate + L-ornithine = L-citrulline + phosphate + H(+). It functions in the pathway amino-acid biosynthesis; L-arginine biosynthesis; L-arginine from L-ornithine and carbamoyl phosphate: step 1/3. Its function is as follows. Reversibly catalyzes the transfer of the carbamoyl group from carbamoyl phosphate (CP) to the N(epsilon) atom of ornithine (ORN) to produce L-citrulline. This Erwinia tasmaniensis (strain DSM 17950 / CFBP 7177 / CIP 109463 / NCPPB 4357 / Et1/99) protein is Ornithine carbamoyltransferase.